Consider the following 147-residue polypeptide: Nucleoside diphosphate kinase (147 aa).

ATP-binding residues include Lys-9, Phe-57, Arg-85, Thr-91, Arg-102, and Asn-112. His-115 serves as the catalytic Pros-phosphohistidine intermediate.

Belongs to the NDK family. As to quaternary structure, homotetramer. It depends on Mg(2+) as a cofactor.

The protein resides in the cytoplasm. The catalysed reaction is a 2'-deoxyribonucleoside 5'-diphosphate + ATP = a 2'-deoxyribonucleoside 5'-triphosphate + ADP. It catalyses the reaction a ribonucleoside 5'-diphosphate + ATP = a ribonucleoside 5'-triphosphate + ADP. Its function is as follows. Major role in the synthesis of nucleoside triphosphates other than ATP. The ATP gamma phosphate is transferred to the NDP beta phosphate via a ping-pong mechanism, using a phosphorylated active-site intermediate. This chain is Nucleoside diphosphate kinase, found in Kosmotoga olearia (strain ATCC BAA-1733 / DSM 21960 / TBF 19.5.1).